The chain runs to 402 residues: Argininosuccinate synthase (402 aa).

ATP contacts are provided by residues 10-18 (AYSGGLDTS) and A38. Residue Y90 participates in L-citrulline binding. Residue G120 coordinates ATP. 3 residues coordinate L-aspartate: T122, N126, and D127. N126 serves as a coordination point for L-citrulline. Positions 130, 179, 188, 264, and 276 each coordinate L-citrulline.

The protein belongs to the argininosuccinate synthase family. Type 1 subfamily. As to quaternary structure, homotetramer.

The protein resides in the cytoplasm. It catalyses the reaction L-citrulline + L-aspartate + ATP = 2-(N(omega)-L-arginino)succinate + AMP + diphosphate + H(+). The protein operates within amino-acid biosynthesis; L-arginine biosynthesis; L-arginine from L-ornithine and carbamoyl phosphate: step 2/3. This chain is Argininosuccinate synthase, found in Psychromonas ingrahamii (strain DSM 17664 / CCUG 51855 / 37).